The primary structure comprises 433 residues: Enolase (433 aa).

A (2R)-2-phosphoglycerate-binding site is contributed by Gln167. Glu209 (proton donor) is an active-site residue. Mg(2+) contacts are provided by Asp246, Glu291, and Asp318. (2R)-2-phosphoglycerate-binding residues include Lys343, Arg372, Ser373, and Lys394. The Proton acceptor role is filled by Lys343.

This sequence belongs to the enolase family. As to quaternary structure, component of the RNA degradosome, a multiprotein complex involved in RNA processing and mRNA degradation. It depends on Mg(2+) as a cofactor.

The protein localises to the cytoplasm. The protein resides in the secreted. Its subcellular location is the cell surface. The catalysed reaction is (2R)-2-phosphoglycerate = phosphoenolpyruvate + H2O. Its pathway is carbohydrate degradation; glycolysis; pyruvate from D-glyceraldehyde 3-phosphate: step 4/5. In terms of biological role, catalyzes the reversible conversion of 2-phosphoglycerate (2-PG) into phosphoenolpyruvate (PEP). It is essential for the degradation of carbohydrates via glycolysis. In Aeromonas hydrophila subsp. hydrophila (strain ATCC 7966 / DSM 30187 / BCRC 13018 / CCUG 14551 / JCM 1027 / KCTC 2358 / NCIMB 9240 / NCTC 8049), this protein is Enolase.